The primary structure comprises 340 residues: MTDQLITLIWIIIKIVLILVPLLVAVAFITLAERKVIGYMQSRVGPNRVGFRGLAQPIADIFKLLLKEVIIPTASSRYLYLIAPILSLVPALAAWAVIPFAQGWVLANVNAGLLFLFAMTSLGVYGILVAGWASNSKYAFFGALRSAAQVVSYEIPMGFALVGVLLAAGTMNLQGIVLRQSGGLWHWFWLPLLPLFVTYWITAVAETNRAPFDVAEGESEIVAGFHVEYAGVTFALFFLAEYANMVLVSAIATVIFLGGWLSPFQGIPGLESLFAWVPGIVWFVLKLSLFIFTYFWMRATFPRYRYDQIMRLCWKVLIPVTLVWIIILALAIEFHWTHWL.

9 consecutive transmembrane segments (helical) span residues 9–29 (IWIIIKIVLILVPLLVAVAFI), 81–101 (LIAPILSLVPALAAWAVIPFA), 113–133 (LLFLFAMTSLGVYGILVAGWA), 158–178 (GFALVGVLLAAGTMNLQGIVL), 184–204 (LWHWFWLPLLPLFVTYWITAV), 221–240 (IVAGFHVEYAGVTFALFFLA), 245–264 (MVLVSAIATVIFLGGWLSPF), 273–293 (LFAWVPGIVWFVLKLSLFIFT), and 316–336 (VLIPVTLVWIIILALAIEFHW).

The protein belongs to the complex I subunit 1 family. NDH-1 is composed of 14 different subunits. Subunits NuoA, H, J, K, L, M, N constitute the membrane sector of the complex.

The protein localises to the cell inner membrane. It carries out the reaction a quinone + NADH + 5 H(+)(in) = a quinol + NAD(+) + 4 H(+)(out). NDH-1 shuttles electrons from NADH, via FMN and iron-sulfur (Fe-S) centers, to quinones in the respiratory chain. The immediate electron acceptor for the enzyme in this species is believed to be ubiquinone. Couples the redox reaction to proton translocation (for every two electrons transferred, four hydrogen ions are translocated across the cytoplasmic membrane), and thus conserves the redox energy in a proton gradient. This subunit may bind ubiquinone. The chain is NADH-quinone oxidoreductase subunit H from Coxiella burnetii (strain CbuK_Q154) (Coxiella burnetii (strain Q154)).